We begin with the raw amino-acid sequence, 775 residues long: tRNA(Met) cytidine acetyltransferase TmcA (775 aa).

Disordered stretches follow at residues 1 to 33 and 191 to 215; these read MPTT…GMDI and TVEQ…PTDA. Over residues 199 to 212 the composition is skewed to pro residues; the sequence is DPPPSRPVPSPTPP. ATP contacts are provided by residues glutamine 230, 254-263, and arginine 403; that span reads GRGKSSAAGL. In terms of domain architecture, N-acetyltransferase spans 438–623; that stretch reads VEYRQLSAAD…YSVVMLDPCS (186 aa). Residues 549-551, 556-562, and glutamate 588 each bind acetyl-CoA; these read IAT and RSRGLGS.

The protein belongs to the RNA cytidine acetyltransferase family. TmcA subfamily.

The protein localises to the cytoplasm. The catalysed reaction is cytidine(34) in elongator tRNA(Met) + acetyl-CoA + ATP + H2O = N(4)-acetylcytidine(34) in elongator tRNA(Met) + ADP + phosphate + CoA + H(+). Functionally, catalyzes the formation of N(4)-acetylcytidine (ac(4)C) at the wobble position of tRNA(Met), by using acetyl-CoA as an acetyl donor and ATP (or GTP). The chain is tRNA(Met) cytidine acetyltransferase TmcA from Haloarcula marismortui (strain ATCC 43049 / DSM 3752 / JCM 8966 / VKM B-1809) (Halobacterium marismortui).